We begin with the raw amino-acid sequence, 287 residues long: Uroplakin-3a (287 aa).

Residues 1–18 form the signal peptide; sequence MPPLWVVLALGCLRLGSG. At 19–207 the chain is on the lumenal side; that stretch reads VNLQPQLASV…DTWPGRRSGG (189 aa). 3 N-linked (GlcNAc...) asparagine glycosylation sites follow: N74, N139, and N170. A helical transmembrane segment spans residues 208–235; it reads MIVITSILGSLPFFLLIGFAGAIVLSLV. At 236–287 the chain is on the cytoplasmic side; the sequence is DRGDADGATSHDSQITQEAVPKSLGTSEPSYTSVNRGPSLDRAEVYASKLQD. The tract at residues 243–274 is disordered; it reads ATSHDSQITQEAVPKSLGTSEPSYTSVNRGPS. Polar residues predominate over residues 259 to 271; that stretch reads LGTSEPSYTSVNR.

This sequence belongs to the uroplakin-3 family. As to quaternary structure, heterodimer with uroplakin-1B (UPK1B). As to expression, bladder epithelium.

The protein localises to the endoplasmic reticulum membrane. Its function is as follows. Component of the asymmetric unit membrane (AUM); a highly specialized biomembrane elaborated by terminally differentiated urothelial cells. May play an important role in AUM-cytoskeleton interaction in terminally differentiated urothelial cells. It also contributes to the formation of urothelial glycocalyx which may play an important role in preventing bacterial adherence. In Bos taurus (Bovine), this protein is Uroplakin-3a (UPK3A).